Reading from the N-terminus, the 353-residue chain is 3-dehydroquinate synthase (353 aa).

Residues 60 to 65 (AGDMNK), 94 to 98 (GMITD), 118 to 119 (TT), lysine 131, and lysine 140 contribute to the NAD(+) site. Residues glutamate 173, histidine 234, and histidine 253 each coordinate Zn(2+).

Belongs to the sugar phosphate cyclases superfamily. Dehydroquinate synthase family. NAD(+) is required as a cofactor. It depends on Co(2+) as a cofactor. Requires Zn(2+) as cofactor.

The protein resides in the cytoplasm. It catalyses the reaction 7-phospho-2-dehydro-3-deoxy-D-arabino-heptonate = 3-dehydroquinate + phosphate. Its pathway is metabolic intermediate biosynthesis; chorismate biosynthesis; chorismate from D-erythrose 4-phosphate and phosphoenolpyruvate: step 2/7. In terms of biological role, catalyzes the conversion of 3-deoxy-D-arabino-heptulosonate 7-phosphate (DAHP) to dehydroquinate (DHQ). In Parabacteroides distasonis (strain ATCC 8503 / DSM 20701 / CIP 104284 / JCM 5825 / NCTC 11152), this protein is 3-dehydroquinate synthase.